We begin with the raw amino-acid sequence, 1030 residues long: Kinesin-related protein 6 (1030 aa).

Positions 3–66 (FENDQLYNWL…FHLLQQLKKQ (64 aa)) constitute an SAM domain. 2 disordered regions span residues 66–164 (QTPP…SDFM) and 178–308 (RQQY…EDDD). The segment covering 68 to 80 (PPISNTSSPVINS) has biased composition (polar residues). Low complexity-rich tracts occupy residues 81–117 (NNNN…NNNN), 125–164 (TSTS…SDFM), 181–197 (YAKQ…KYQS), and 225–238 (QQQQ…QQQD). A compositionally biased stretch (acidic residues) spans 239–290 (FEFEEEEEEEDQQQQYDEEEEEEEEYEEDFYKEDLGEIDDGNVLDISDDEPD). Residues 453–775 (RIRVCVRKRP…LRYADRVKEL (323 aa)) enclose the Kinesin motor domain. An ATP-binding site is contributed by 543 to 550 (GQTGSGKT). Low complexity-rich tracts occupy residues 826–839 (INSQ…TSQP), 849–906 (QQQE…QTQP), and 981–1009 (PIQQ…QTPQ). Disordered regions lie at residues 826-915 (INSQ…KIDF) and 981-1030 (PIQQ…SSRN).

Belongs to the TRAFAC class myosin-kinesin ATPase superfamily. Kinesin family.

It is found in the cytoplasm. The protein localises to the cytoskeleton. In terms of biological role, microtubule-associated force-producing protein that plays a role in organelle transport. Its motor activity is directed toward the microtubule's plus end. The chain is Kinesin-related protein 6 (kif6) from Dictyostelium discoideum (Social amoeba).